Consider the following 210-residue polypeptide: Hypoxanthine-guanine phosphoribosyltransferase (210 aa).

Residues lysine 54, 113–121 (EDILDTALT), lysine 145, and aspartate 173 contribute to the GMP site. Aspartate 117 functions as the Proton acceptor in the catalytic mechanism. Aspartate 173 is a binding site for Mg(2+).

The protein belongs to the purine/pyrimidine phosphoribosyltransferase family. Mg(2+) serves as cofactor.

It is found in the cytoplasm. The catalysed reaction is IMP + diphosphate = hypoxanthine + 5-phospho-alpha-D-ribose 1-diphosphate. It catalyses the reaction GMP + diphosphate = guanine + 5-phospho-alpha-D-ribose 1-diphosphate. It participates in purine metabolism; IMP biosynthesis via salvage pathway; IMP from hypoxanthine: step 1/1. In terms of biological role, converts guanine to guanosine monophosphate, and hypoxanthine to inosine monophosphate. Transfers the 5-phosphoribosyl group from 5-phosphoribosylpyrophosphate onto the purine. Plays a central role in the generation of purine nucleotides through the purine salvage pathway. The chain is Hypoxanthine-guanine phosphoribosyltransferase (HGPRT) from Trypanosoma brucei brucei.